The primary structure comprises 720 residues: Polyribonucleotide nucleotidyltransferase (720 aa).

The Mg(2+) site is built by D484 and D490. A KH domain is found at P551–I610. The region spanning G620–R688 is the S1 motif domain. Residues P697–S720 are disordered.

Belongs to the polyribonucleotide nucleotidyltransferase family. It depends on Mg(2+) as a cofactor.

The protein resides in the cytoplasm. The enzyme catalyses RNA(n+1) + phosphate = RNA(n) + a ribonucleoside 5'-diphosphate. Involved in mRNA degradation. Catalyzes the phosphorolysis of single-stranded polyribonucleotides processively in the 3'- to 5'-direction. The chain is Polyribonucleotide nucleotidyltransferase from Dehalococcoides mccartyi (strain ATCC BAA-2266 / KCTC 15142 / 195) (Dehalococcoides ethenogenes (strain 195)).